A 235-amino-acid polypeptide reads, in one-letter code: uncharacterized protein (235 aa).

One can recognise an ABC transporter domain in the interval 2–235; it reads IKLKNVTKTY…EEKLRGFDDR (234 aa). ATP is bound at residue 38-45; it reads GPSGSGKS.

Belongs to the ABC transporter superfamily.

This is an uncharacterized protein from Methanocaldococcus jannaschii (strain ATCC 43067 / DSM 2661 / JAL-1 / JCM 10045 / NBRC 100440) (Methanococcus jannaschii).